The chain runs to 133 residues: Small ribosomal subunit protein uS11 (133 aa).

The protein belongs to the universal ribosomal protein uS11 family. In terms of assembly, part of the 30S ribosomal subunit. Interacts with proteins S7 and S18. Binds to IF-3.

Functionally, located on the platform of the 30S subunit, it bridges several disparate RNA helices of the 16S rRNA. Forms part of the Shine-Dalgarno cleft in the 70S ribosome. This Bordetella petrii (strain ATCC BAA-461 / DSM 12804 / CCUG 43448) protein is Small ribosomal subunit protein uS11.